A 73-amino-acid chain; its full sequence is Ocellatin-PT8 (73 aa).

Positions M1–C22 are cleaved as a signal peptide. The propeptide occupies D23–E39.

Expressed by the skin glands.

Its subcellular location is the secreted. Has antibacterial activity against Gram-negative bacteria E.coli ATCC 25922 (MIC=60 uM), K.pneumoniae ATCC 700603 (MIC=240 uM) and S.choleraesuis ATCC 14028 (MIC=240 uM) and against Gram-positive bacterium S.aureus ATCC 29313 (MIC=240 uM). Shows no hemolytic activity and no cytotoxicity. This chain is Ocellatin-PT8, found in Leptodactylus pustulatus (Ceara white-lipped frog).